A 358-amino-acid polypeptide reads, in one-letter code: UDP-N-acetylglucosamine--N-acetylmuramyl-(pentapeptide) pyrophosphoryl-undecaprenol N-acetylglucosamine transferase (358 aa).

Residues 11–13 (TGG), asparagine 122, arginine 161, serine 189, isoleucine 243, 262–267 (ALTVCE), and glutamine 288 each bind UDP-N-acetyl-alpha-D-glucosamine.

This sequence belongs to the glycosyltransferase 28 family. MurG subfamily.

Its subcellular location is the cell inner membrane. The enzyme catalyses di-trans,octa-cis-undecaprenyl diphospho-N-acetyl-alpha-D-muramoyl-L-alanyl-D-glutamyl-meso-2,6-diaminopimeloyl-D-alanyl-D-alanine + UDP-N-acetyl-alpha-D-glucosamine = di-trans,octa-cis-undecaprenyl diphospho-[N-acetyl-alpha-D-glucosaminyl-(1-&gt;4)]-N-acetyl-alpha-D-muramoyl-L-alanyl-D-glutamyl-meso-2,6-diaminopimeloyl-D-alanyl-D-alanine + UDP + H(+). It participates in cell wall biogenesis; peptidoglycan biosynthesis. In terms of biological role, cell wall formation. Catalyzes the transfer of a GlcNAc subunit on undecaprenyl-pyrophosphoryl-MurNAc-pentapeptide (lipid intermediate I) to form undecaprenyl-pyrophosphoryl-MurNAc-(pentapeptide)GlcNAc (lipid intermediate II). In Coxiella burnetii (strain CbuK_Q154) (Coxiella burnetii (strain Q154)), this protein is UDP-N-acetylglucosamine--N-acetylmuramyl-(pentapeptide) pyrophosphoryl-undecaprenol N-acetylglucosamine transferase.